Reading from the N-terminus, the 252-residue chain is Triosephosphate isomerase (252 aa).

10-12 (NWK) is a substrate binding site. His-96 (electrophile) is an active-site residue. Catalysis depends on Glu-168, which acts as the Proton acceptor. Substrate is bound by residues Gly-174, Ser-214, and 235–236 (GG).

The protein belongs to the triosephosphate isomerase family. As to quaternary structure, homodimer.

Its subcellular location is the cytoplasm. It catalyses the reaction D-glyceraldehyde 3-phosphate = dihydroxyacetone phosphate. Its pathway is carbohydrate biosynthesis; gluconeogenesis. The protein operates within carbohydrate degradation; glycolysis; D-glyceraldehyde 3-phosphate from glycerone phosphate: step 1/1. In terms of biological role, seems to be capable of enhancing bacteriocin synthesis. Involved in the gluconeogenesis. Catalyzes stereospecifically the conversion of dihydroxyacetone phosphate (DHAP) to D-glyceraldehyde-3-phosphate (G3P). In Lactobacillus delbrueckii subsp. lactis, this protein is Triosephosphate isomerase.